The sequence spans 137 residues: Nucleoside diphosphate kinase (137 aa).

ATP is bound by residues K9, F57, R85, T91, R102, and N112. H115 functions as the Pros-phosphohistidine intermediate in the catalytic mechanism.

Belongs to the NDK family. Homotetramer. It depends on Mg(2+) as a cofactor.

The protein resides in the cytoplasm. The catalysed reaction is a 2'-deoxyribonucleoside 5'-diphosphate + ATP = a 2'-deoxyribonucleoside 5'-triphosphate + ADP. It carries out the reaction a ribonucleoside 5'-diphosphate + ATP = a ribonucleoside 5'-triphosphate + ADP. In terms of biological role, major role in the synthesis of nucleoside triphosphates other than ATP. The ATP gamma phosphate is transferred to the NDP beta phosphate via a ping-pong mechanism, using a phosphorylated active-site intermediate. The sequence is that of Nucleoside diphosphate kinase from Leptospira borgpetersenii serovar Hardjo-bovis (strain L550).